A 102-amino-acid chain; its full sequence is Carboxysome shell protein CcmK3 (102 aa).

The BMC domain occupies 4-90; sequence AVGVIQTDGF…PPDNVETVMP (87 aa).

The protein belongs to the bacterial microcompartments protein family. CcmK subfamily. Interacts stably with CcmK4, forming heterohexamers that can make dodecamers. Heterohexamers have a 1:2 CcmK3:CcmK4 stoichiometry. Upon expression in E.coli forms oligomers that could be dimers or trimers, but never hexamers; bulky residues in the pore region probably preclude the formation of homohexamers.

The protein localises to the carboxysome. In terms of biological role, a probably non-essential, minor shell protein of the carboxysome, a polyhedral inclusion where RuBisCO (ribulose bisphosphate carboxylase, rbcL-rbcS) is sequestered. Hexamers form sheets that form the facets of the polyhedral carboxysome. In PCC 7418 there are several CcmK paralogs with presumably functional differences. This subunit probably only makes heterohexamers with CcmK4. Heterohexamers can also make dodecamers, formation depends on buffer conditions. The sequence is that of Carboxysome shell protein CcmK3 from Halothece sp. (strain PCC 7418) (Synechococcus sp. (strain PCC 7418)).